The chain runs to 198 residues: Probable nicotinate-nucleotide adenylyltransferase (198 aa).

Belongs to the NadD family.

It catalyses the reaction nicotinate beta-D-ribonucleotide + ATP + H(+) = deamido-NAD(+) + diphosphate. It participates in cofactor biosynthesis; NAD(+) biosynthesis; deamido-NAD(+) from nicotinate D-ribonucleotide: step 1/1. Functionally, catalyzes the reversible adenylation of nicotinate mononucleotide (NaMN) to nicotinic acid adenine dinucleotide (NaAD). This Chlorobium limicola (strain DSM 245 / NBRC 103803 / 6330) protein is Probable nicotinate-nucleotide adenylyltransferase.